Consider the following 134-residue polypeptide: Holo-[acyl-carrier-protein] synthase (134 aa).

Mg(2+)-binding residues include Asp-8 and Glu-59.

It belongs to the P-Pant transferase superfamily. AcpS family. Mg(2+) is required as a cofactor.

It localises to the cytoplasm. It carries out the reaction apo-[ACP] + CoA = holo-[ACP] + adenosine 3',5'-bisphosphate + H(+). Functionally, transfers the 4'-phosphopantetheine moiety from coenzyme A to a Ser of acyl-carrier-protein. The protein is Holo-[acyl-carrier-protein] synthase of Zymomonas mobilis subsp. mobilis (strain ATCC 31821 / ZM4 / CP4).